A 355-amino-acid polypeptide reads, in one-letter code: uncharacterized protein (355 aa).

The signal sequence occupies residues 1–27; sequence MESPIRTARRTLPLLIGATCLVLALTG. Cys-28 carries N-palmitoyl cysteine lipidation. The S-diacylglycerol cysteine moiety is linked to residue Cys-28. The segment at 33 to 53 is disordered; the sequence is GPAQARPTPSASTSPKQAPAL. Over residues 39–48 the composition is skewed to polar residues; sequence PTPSASTSPK.

The protein localises to the cell membrane. This is an uncharacterized protein from Streptomyces coelicolor (strain ATCC BAA-471 / A3(2) / M145).